The primary structure comprises 400 residues: Na(+)/H(+) antiporter NhaA 1 (400 aa).

11 consecutive transmembrane segments (helical) span residues 25-45 (IVLM…FSSM), 67-87 (ILHW…GMEI), 103-123 (ILPV…YALF), 130-150 (IIGW…ILSL), 159-179 (IIIF…IVIA), 184-204 (SEIS…IILA), 213-233 (WLYI…GVHE), 264-284 (VLTP…NSGI), 303-323 (IIFG…YILV), 339-359 (LYGA…VSSL), and 372-392 (ISII…FKII).

The protein belongs to the NhaA Na(+)/H(+) (TC 2.A.33) antiporter family.

The protein localises to the cell membrane. It carries out the reaction Na(+)(in) + 2 H(+)(out) = Na(+)(out) + 2 H(+)(in). Functionally, na(+)/H(+) antiporter that extrudes sodium in exchange for external protons. The chain is Na(+)/H(+) antiporter NhaA 1 from Clostridium beijerinckii (strain ATCC 51743 / NCIMB 8052) (Clostridium acetobutylicum).